The sequence spans 193 residues: Ion-translocating oxidoreductase complex subunit A (193 aa).

6 helical membrane passes run 5–25 (LLLLVGTVLVNNFVLVQFLGL), 39–59 (IGMSFATVFVMTLASLLSYLV), 72–92 (LTTMSFILVIAVVVQFTEMVV), 102–122 (LLGIFLPLITTNCAVLGVALL), 134–154 (IIYGFGAALGFSLVLIMFSAM), and 171–191 (AIAMITAGLMSLAFLGFTGLV).

The protein belongs to the NqrDE/RnfAE family. As to quaternary structure, the complex is composed of six subunits: RnfA, RnfB, RnfC, RnfD, RnfE and RnfG.

The protein resides in the cell inner membrane. Part of a membrane-bound complex that couples electron transfer with translocation of ions across the membrane. The polypeptide is Ion-translocating oxidoreductase complex subunit A (Colwellia psychrerythraea (strain 34H / ATCC BAA-681) (Vibrio psychroerythus)).